Consider the following 421-residue polypeptide: Probable sugar-binding periplasmic protein (421 aa).

A signal peptide spans 1-27 (MHKLLKLAAMGTAACALLAGMAPVANA).

This sequence belongs to the bacterial solute-binding protein 1 family.

It is found in the periplasm. Its function is as follows. Part of a binding-protein-dependent transport system for a sugar. The protein is Probable sugar-binding periplasmic protein of Brucella melitensis biotype 1 (strain ATCC 23456 / CCUG 17765 / NCTC 10094 / 16M).